The sequence spans 345 residues: L-threonine 3-dehydrogenase (345 aa).

Cys39 lines the Zn(2+) pocket. Catalysis depends on charge relay system residues Thr41 and His44. The Zn(2+) site is built by His64, Glu65, Cys94, Cys97, Cys100, and Cys108. Residues Ile176, Asp196, Arg201, 263–265, and 287–288 contribute to the NAD(+) site; these read LGI and VY.

It belongs to the zinc-containing alcohol dehydrogenase family. As to quaternary structure, homotetramer. Zn(2+) is required as a cofactor.

The protein resides in the cytoplasm. The enzyme catalyses L-threonine + NAD(+) = (2S)-2-amino-3-oxobutanoate + NADH + H(+). It functions in the pathway amino-acid degradation; L-threonine degradation via oxydo-reductase pathway; glycine from L-threonine: step 1/2. In terms of biological role, catalyzes the NAD(+)-dependent oxidation of L-threonine to 2-amino-3-ketobutyrate. This chain is L-threonine 3-dehydrogenase, found in Anaeromyxobacter dehalogenans (strain 2CP-C).